Consider the following 263-residue polypeptide: MARRPLVMGNWKLNGSKAFTKELIEGLKAELHDVTGCDVAIAPPVMYLGTAEAALSGCGCNCGGKSVIQLGAQNVDINVKGAFTGDISTEMLKDFGAKYIIIGHSERRTYHKESDEFVAKKFGALKEAGLVPVLCIGESEAENEAGKTEEVCARQIDAVINALGVEAFNGAVIAYEPIWAIGTGKSATPAQAQAVHAFIRGHIAAKSQAVAEQVIIQYGGSVNDANAAELFTQPDIDGALVGGASLKAPAFAVIVKAAAAAKN.

A substrate-binding site is contributed by 10–12; the sequence is NWK. Histidine 104 serves as the catalytic Electrophile. The active-site Proton acceptor is glutamate 176. Substrate-binding positions include glycine 182, serine 221, and 242–243; that span reads GG.

Belongs to the triosephosphate isomerase family. As to quaternary structure, homodimer.

The protein resides in the cytoplasm. The catalysed reaction is D-glyceraldehyde 3-phosphate = dihydroxyacetone phosphate. It participates in carbohydrate biosynthesis; gluconeogenesis. Its pathway is carbohydrate degradation; glycolysis; D-glyceraldehyde 3-phosphate from glycerone phosphate: step 1/1. Involved in the gluconeogenesis. Catalyzes stereospecifically the conversion of dihydroxyacetone phosphate (DHAP) to D-glyceraldehyde-3-phosphate (G3P). The sequence is that of Triosephosphate isomerase from Haemophilus influenzae (strain PittEE).